The sequence spans 306 residues: Mitochondrial uncoupling protein 1 (306 aa).

3 Solcar repeats span residues 9 to 102, 112 to 203, and 212 to 296; these read LSLP…VKNL, VPLS…VKET, and DNVV…AKKY. 6 consecutive transmembrane segments (helical) span residues 15–35, 71–91, 118–138, 177–197, 218–238, and 269–289; these read FACS…LDTA, LRSL…FGGL, ILAG…TDLV, TGLG…LASY, ILSG…VDVV, and YKGF…MFLT.

This sequence belongs to the mitochondrial carrier (TC 2.A.29) family. As to expression, widely expressed.

It is found in the mitochondrion inner membrane. Its function is as follows. PUMPS are mitochondrial transporter proteins that create proton leaks across the inner mitochondrial membrane, thus uncoupling oxidative phosphorylation. This leads to a decrease in the efficiency of oxidative phosphorylation and an increase in heat production. Is involved in protecting plant cells against oxidative stress damage and maintaining the redox balance of the mitochondrial electron transport chain to facilitate photosynthetic metabolism. May play a regulatory role during photorespiration. This is Mitochondrial uncoupling protein 1 (PUMP1) from Arabidopsis thaliana (Mouse-ear cress).